Consider the following 363-residue polypeptide: Protein CPn_1058/CP_0792/CPj1058/CpB1100 (363 aa).

The signal sequence occupies residues 1-27; the sequence is MKLYQTLRGIVLVSTGCIFLGMHGGYA.

It belongs to the chlamydial CPn_1058/CT_355/TC_0634 family.

The protein is Protein CPn_1058/CP_0792/CPj1058/CpB1100 of Chlamydia pneumoniae (Chlamydophila pneumoniae).